The chain runs to 163 residues: MFVDDVTRAFESGDFARPNLFQVEISYLGQNFTFQCKATALPAGIVEKIPVGFMNRKINDAGDRTFDDWTVTVMNDEAHDARQKFVDWQSIAAGQGNEITGGKPAEYKKSAVVRQYARDAKTVTKEVEIKGLWPTNVGELQLDWDSNNEIQTFEVTLALDYWE.

The protein belongs to the T4-like viruses Gp19 protein family.

The protein localises to the virion. Structural component of the bacteriophage tail which consists of a contractile sheath, a tube and a baseplate. The central cylindrical segment of the tail consists of a rigid tube, composed of multiple copies of the tail tube protein. During infection, contraction of the sheath drives the central tube through the host outer membrane, creating a channel for DNA ejection from the capsid into the host cell. In Escherichia coli (Bacteriophage T6), this protein is Tail tube protein gp19 (19).